The sequence spans 1492 residues: ATP-binding cassette sub-family C member 10 (1492 aa).

The next 9 membrane-spanning stretches (helical) occupy residues 32-52 (LVLS…YLGT), 70-90 (LAAS…VALP), 102-122 (VLAG…LWVL), 133-153 (PLAL…TVLW), 172-192 (LCLL…WAAP), 293-313 (LVGT…VGFL), 320-340 (LSHG…GAVL), 391-411 (LLNF…LAIT), and 414-434 (LLYQ…LLLV). Residues 285–563 (YLALGLLKLV…FPWVINGLLE (279 aa)) form the ABC transmembrane type-1 1 domain. Thr463 carries the phosphothreonine modification. Position 467 is a phosphoserine (Ser467). 2 helical membrane passes run 507–527 (VYLW…TYVL) and 538–558 (FTAL…PWVI). Positions 598-824 (LELHGALFSW…VQAVPKAWAE (227 aa)) constitute an ABC transporter 1 domain. 633–640 (GKVGCGKS) is an ATP binding site. Positions 825–860 (NGQESDSATAQSVQNPEKTKEGLEEEQSTSGRLLQE) are disordered. Residues 826 to 840 (GQESDSATAQSVQNP) are compositionally biased toward polar residues. Helical transmembrane passes span 875 to 895 (AYWK…LLLM), 933 to 953 (LFSP…VFPL), 974 to 994 (IAGV…AGTL), 1051 to 1071 (AGLL…LLLL), 1153 to 1173 (IRLQ…ALVQ), and 1182 to 1202 (GLVG…SGLV). The ABC transmembrane type-1 2 domain occupies 885 to 1210 (ALAILFSLLL…LVSSFTQTEA (326 aa)). An ABC transporter 2 domain is found at 1246 to 1479 (VEFQDVVLAY…PHSLFQQLLQ (234 aa)). An ATP-binding site is contributed by 1280-1287 (GRTGSGKS).

This sequence belongs to the ABC transporter superfamily. ABCC family. Conjugate transporter (TC 3.A.1.208) subfamily. In terms of tissue distribution, in testis, localized to peritubular myoid cells, Leydig cells, along the basal membrane of Sertoli cells, moderately in the adluminal compartment of the seminiferous tubules, and in vascular endothelial cells. Specifically expressed in spleen. As to expression, widely expressed.

It is found in the cell membrane. It localises to the basolateral cell membrane. The protein resides in the basal cell membrane. It carries out the reaction ATP + H2O + xenobioticSide 1 = ADP + phosphate + xenobioticSide 2.. It catalyses the reaction an S-substituted glutathione(in) + ATP + H2O = an S-substituted glutathione(out) + ADP + phosphate + H(+). The catalysed reaction is 17beta-estradiol 17-O-(beta-D-glucuronate)(in) + ATP + H2O = 17beta-estradiol 17-O-(beta-D-glucuronate)(out) + ADP + phosphate + H(+). The enzyme catalyses leukotriene C4(in) + ATP + H2O = leukotriene C4(out) + ADP + phosphate + H(+). Its function is as follows. ATP-dependent transporter of the ATP-binding cassette (ABC) family that actively extrudes physiological compounds, and xenobiotics from cells. Lipophilic anion transporter that mediates ATP-dependent transport of glucuronide conjugates such as estradiol-17-beta-o-glucuronide and GSH conjugates such as leukotriene C4 (LTC4). May contribute to regulate the transport of organic compounds in testes across the blood-testis-barrier. Mediates multidrug resistance (MDR) in cancer cells by preventing the intracellular accumulation of certain antitumor drugs, such as, docetaxel and paclitaxel. Does not transport glycocholic acid, taurocholic acid, MTX, folic acid, cAMP, or cGMP. The sequence is that of ATP-binding cassette sub-family C member 10 (ABCC10) from Homo sapiens (Human).